The sequence spans 258 residues: Type III pantothenate kinase (258 aa).

6–13 (DVGNTNIV) lines the ATP pocket. Residues tyrosine 100 and 107–110 (GADR) each bind substrate. The active-site Proton acceptor is aspartate 109. Aspartate 129 contacts K(+). Residue threonine 132 coordinates ATP. Position 184 (threonine 184) interacts with substrate.

Belongs to the type III pantothenate kinase family. Homodimer. Requires NH4(+) as cofactor. K(+) is required as a cofactor.

Its subcellular location is the cytoplasm. It carries out the reaction (R)-pantothenate + ATP = (R)-4'-phosphopantothenate + ADP + H(+). Its pathway is cofactor biosynthesis; coenzyme A biosynthesis; CoA from (R)-pantothenate: step 1/5. Catalyzes the phosphorylation of pantothenate (Pan), the first step in CoA biosynthesis. The polypeptide is Type III pantothenate kinase (Clostridium botulinum (strain Kyoto / Type A2)).